Here is a 68-residue protein sequence, read N- to C-terminus: Metallothionein (68 aa).

It belongs to the metallothionein superfamily. Type 4 family.

Functionally, metallothioneins have a high content of cysteine residues that bind various heavy metals. The chain is Metallothionein (MT1) from Lytechinus pictus (Painted sea urchin).